The primary structure comprises 397 residues: Phosphoglycerate kinase (397 aa).

Residues 21 to 23, arginine 36, 59 to 62, arginine 118, and arginine 151 each bind substrate; these read DFN and HCGR. Residues lysine 201, glutamate 323, and 353-356 contribute to the ATP site; that span reads GGDT.

It belongs to the phosphoglycerate kinase family. Monomer.

Its subcellular location is the cytoplasm. It catalyses the reaction (2R)-3-phosphoglycerate + ATP = (2R)-3-phospho-glyceroyl phosphate + ADP. The protein operates within carbohydrate degradation; glycolysis; pyruvate from D-glyceraldehyde 3-phosphate: step 2/5. The chain is Phosphoglycerate kinase from Bartonella henselae (strain ATCC 49882 / DSM 28221 / CCUG 30454 / Houston 1) (Rochalimaea henselae).